Here is a 162-residue protein sequence, read N- to C-terminus: Transcription elongation factor GreA (162 aa).

A coiled-coil region spans residues Glu45–Glu74.

Belongs to the GreA/GreB family.

Its function is as follows. Necessary for efficient RNA polymerase transcription elongation past template-encoded arresting sites. The arresting sites in DNA have the property of trapping a certain fraction of elongating RNA polymerases that pass through, resulting in locked ternary complexes. Cleavage of the nascent transcript by cleavage factors such as GreA or GreB allows the resumption of elongation from the new 3'terminus. GreA releases sequences of 2 to 3 nucleotides. The sequence is that of Transcription elongation factor GreA from Rickettsia typhi (strain ATCC VR-144 / Wilmington).